Here is a 146-residue protein sequence, read N- to C-terminus: Protein MucA (146 aa).

Active-site for autocatalytic cleavage activity residues include Ser-62 and Lys-99.

It belongs to the peptidase S24 family.

Functionally, involved in UV protection and mutation. The polypeptide is Protein MucA (mucA) (Escherichia coli).